An 80-amino-acid chain; its full sequence is Trefoil factor 3 (80 aa).

The signal sequence occupies residues 1-21 (MEARMFWLLVVLLALASSSSA). The region spanning 30-73 (NQCAVPAKDRVDCGYPQVTPEQCNNRGCCFDSSIXGVPWCFKPL) is the P-type domain. Intrachain disulfides connect Cys32-Cys58, Cys42-Cys57, and Cys52-Cys69.

Monomer. Homodimer; disulfide-linked.

The protein resides in the secreted. It localises to the extracellular space. Its subcellular location is the extracellular matrix. The protein localises to the cytoplasm. In terms of biological role, involved in the maintenance and repair of the intestinal mucosa. Promotes the mobility of epithelial cells in healing processes (motogen). The polypeptide is Trefoil factor 3 (TFF3) (Sus scrofa (Pig)).